We begin with the raw amino-acid sequence, 228 residues long: Cytidylate kinase (228 aa).

An ATP-binding site is contributed by 12–20 (GPSGSGKGT).

This sequence belongs to the cytidylate kinase family. Type 1 subfamily.

It is found in the cytoplasm. The catalysed reaction is CMP + ATP = CDP + ADP. It carries out the reaction dCMP + ATP = dCDP + ADP. The protein is Cytidylate kinase of Pseudomonas putida (strain ATCC 47054 / DSM 6125 / CFBP 8728 / NCIMB 11950 / KT2440).